A 357-amino-acid polypeptide reads, in one-letter code: Dihydroorotate dehydrogenase (quinone) (357 aa).

FMN contacts are provided by residues 65–69 (AGLDK) and Thr89. Lys69 is a substrate binding site. 114–118 (NRFGF) is a substrate binding site. The FMN site is built by Asn156 and Asn189. Substrate is bound at residue Asn189. Ser192 functions as the Nucleophile in the catalytic mechanism. Residue Asn194 participates in substrate binding. FMN contacts are provided by Lys234 and Thr262. 263 to 264 (NT) provides a ligand contact to substrate. FMN-binding positions include Gly285, Gly314, and 335 to 336 (YT).

This sequence belongs to the dihydroorotate dehydrogenase family. Type 2 subfamily. In terms of assembly, monomer. FMN serves as cofactor.

It is found in the cell membrane. It carries out the reaction (S)-dihydroorotate + a quinone = orotate + a quinol. Its pathway is pyrimidine metabolism; UMP biosynthesis via de novo pathway; orotate from (S)-dihydroorotate (quinone route): step 1/1. Catalyzes the conversion of dihydroorotate to orotate with quinone as electron acceptor. In Albidiferax ferrireducens (strain ATCC BAA-621 / DSM 15236 / T118) (Rhodoferax ferrireducens), this protein is Dihydroorotate dehydrogenase (quinone).